The following is a 396-amino-acid chain: Tryptophan synthase beta chain (396 aa).

Lys86 carries the post-translational modification N6-(pyridoxal phosphate)lysine.

The protein belongs to the TrpB family. In terms of assembly, tetramer of two alpha and two beta chains. The cofactor is pyridoxal 5'-phosphate.

It catalyses the reaction (1S,2R)-1-C-(indol-3-yl)glycerol 3-phosphate + L-serine = D-glyceraldehyde 3-phosphate + L-tryptophan + H2O. It participates in amino-acid biosynthesis; L-tryptophan biosynthesis; L-tryptophan from chorismate: step 5/5. Functionally, the beta subunit is responsible for the synthesis of L-tryptophan from indole and L-serine. The sequence is that of Tryptophan synthase beta chain from Francisella tularensis subsp. novicida (strain U112).